A 160-amino-acid polypeptide reads, in one-letter code: Dihydrofolate reductase (160 aa).

The DHFR domain maps to 2-159 (TFSLIVATTL…YDCRFLILTR (158 aa)). Ile6 lines the substrate pocket. NADP(+)-binding positions include Ala8 and 14–20 (VIGKDNQ). A substrate-binding site is contributed by Asp28. 46 to 47 (KT) contributes to the NADP(+) binding site. Substrate is bound by residues Arg53 and Arg58. Residues 64–65 (SR) and 96–103 (GGGELFKQ) each bind NADP(+). Thr114 contacts substrate.

This sequence belongs to the dihydrofolate reductase family.

It carries out the reaction (6S)-5,6,7,8-tetrahydrofolate + NADP(+) = 7,8-dihydrofolate + NADPH + H(+). It functions in the pathway cofactor biosynthesis; tetrahydrofolate biosynthesis; 5,6,7,8-tetrahydrofolate from 7,8-dihydrofolate: step 1/1. Functionally, key enzyme in folate metabolism. Catalyzes an essential reaction for de novo glycine and purine synthesis, and for DNA precursor synthesis. This is Dihydrofolate reductase (folA) from Haemophilus influenzae (strain ATCC 51907 / DSM 11121 / KW20 / Rd).